The sequence spans 367 residues: Undecaprenyl-phosphate alpha-N-acetylglucosaminyl 1-phosphate transferase (367 aa).

9 consecutive transmembrane segments (helical) span residues 3–23 (LLTA…FIFL), 45–65 (GVIP…MFGL), 69–89 (YIPH…VGAM), 129–149 (WELV…WAAI), 158–178 (IDGL…LILW), 187–207 (MWCF…LGIL), 213–233 (VFMG…LLLE), 242–262 (ISPV…VAIM), and 318–338 (VPEW…GYCI).

The protein belongs to the glycosyltransferase 4 family. WecA subfamily. Mg(2+) serves as cofactor. The cofactor is Mn(2+).

It is found in the cell inner membrane. The enzyme catalyses di-trans,octa-cis-undecaprenyl phosphate + UDP-N-acetyl-alpha-D-glucosamine = N-acetyl-alpha-D-glucosaminyl-di-trans,octa-cis-undecaprenyl diphosphate + UMP. It participates in bacterial outer membrane biogenesis; LPS O-antigen biosynthesis. The protein operates within bacterial outer membrane biogenesis; enterobacterial common antigen biosynthesis. Functionally, catalyzes the transfer of the GlcNAc-1-phosphate moiety from UDP-GlcNAc onto the carrier lipid undecaprenyl phosphate (C55-P), yielding GlcNAc-pyrophosphoryl-undecaprenyl (GlcNAc-PP-C55). This Salmonella typhi protein is Undecaprenyl-phosphate alpha-N-acetylglucosaminyl 1-phosphate transferase.